The following is a 208-amino-acid chain: Small ribosomal subunit protein uS4 (208 aa).

In terms of domain architecture, S4 RNA-binding spans 98–158; it reads CRLDTVSYRM…EKAKNHLRIK (61 aa).

The protein belongs to the universal ribosomal protein uS4 family. In terms of assembly, part of the 30S ribosomal subunit. Contacts protein S5. The interaction surface between S4 and S5 is involved in control of translational fidelity.

One of the primary rRNA binding proteins, it binds directly to 16S rRNA where it nucleates assembly of the body of the 30S subunit. Its function is as follows. With S5 and S12 plays an important role in translational accuracy. This chain is Small ribosomal subunit protein uS4, found in Nitrosospira multiformis (strain ATCC 25196 / NCIMB 11849 / C 71).